The following is a 486-amino-acid chain: Ribulose bisphosphate carboxylase large chain, chromosomal (486 aa).

Substrate-binding residues include N126 and T176. The active-site Proton acceptor is the K178. K180 serves as a coordination point for substrate. Mg(2+)-binding residues include K204, D206, and E207. K204 bears the N6-carboxylysine mark. Catalysis depends on H296, which acts as the Proton acceptor. Substrate is bound by residues R297, H329, and S381.

The protein belongs to the RuBisCO large chain family. Type I subfamily. In terms of assembly, heterohexadecamer of 8 large chains and 8 small chains; disulfide-linked. The disulfide link is formed within the large subunit homodimers. Requires Mg(2+) as cofactor. The disulfide bond which can form between Cys-278 in the large chain dimeric partners within the hexadecamer appears to be associated with oxidative stress and protein turnover.

It catalyses the reaction 2 (2R)-3-phosphoglycerate + 2 H(+) = D-ribulose 1,5-bisphosphate + CO2 + H2O. The catalysed reaction is D-ribulose 1,5-bisphosphate + O2 = 2-phosphoglycolate + (2R)-3-phosphoglycerate + 2 H(+). RuBisCO catalyzes two reactions: the carboxylation of D-ribulose 1,5-bisphosphate, the primary event in carbon dioxide fixation, as well as the oxidative fragmentation of the pentose substrate. Both reactions occur simultaneously and in competition at the same active site. The polypeptide is Ribulose bisphosphate carboxylase large chain, chromosomal (cbbL1) (Cupriavidus necator (strain ATCC 17699 / DSM 428 / KCTC 22496 / NCIMB 10442 / H16 / Stanier 337) (Ralstonia eutropha)).